The following is a 400-amino-acid chain: Subtilisin-like protease 11 (400 aa).

The N-terminal stretch at Met1–Ala19 is a signal peptide. Positions Ala20–Ser117 are excised as a propeptide. In terms of domain architecture, Inhibitor I9 spans Ser35 to Ile116. The Peptidase S8 domain occupies Ser127–Lys400. The N-linked (GlcNAc...) asparagine glycan is linked to Asn138. The active-site Charge relay system is the Asp159. N-linked (GlcNAc...) asparagine glycosylation occurs at Asn181. Residue His191 is the Charge relay system of the active site. N-linked (GlcNAc...) asparagine glycans are attached at residues Asn252 and Asn337. The Charge relay system role is filled by Ser346. Residues Asn388 and Asn396 are each glycosylated (N-linked (GlcNAc...) asparagine).

This sequence belongs to the peptidase S8 family.

Its subcellular location is the secreted. Its function is as follows. Secreted subtilisin-like serine protease with keratinolytic activity that contributes to pathogenicity. The chain is Subtilisin-like protease 11 (SUB11) from Trichophyton verrucosum (strain HKI 0517).